A 91-amino-acid chain; its full sequence is Large ribosomal subunit protein bL31B (91 aa).

The protein belongs to the bacterial ribosomal protein bL31 family. Type B subfamily. In terms of assembly, part of the 50S ribosomal subunit.

In Neisseria gonorrhoeae (strain NCCP11945), this protein is Large ribosomal subunit protein bL31B.